Consider the following 217-residue polypeptide: Spore coat protein F-like protein YhcQ (217 aa).

Low complexity predominate over residues Met1–Gln11. Positions Met1 to Glu28 are disordered.

This sequence belongs to the CotF family.

The protein localises to the spore coat. The chain is Spore coat protein F-like protein YhcQ (yhcQ) from Bacillus subtilis (strain 168).